Consider the following 442-residue polypeptide: UDP-N-acetylmuramoylalanine--D-glutamate ligase (442 aa).

Glycine 113–threonine 119 serves as a coordination point for ATP.

Belongs to the MurCDEF family.

It is found in the cytoplasm. The catalysed reaction is UDP-N-acetyl-alpha-D-muramoyl-L-alanine + D-glutamate + ATP = UDP-N-acetyl-alpha-D-muramoyl-L-alanyl-D-glutamate + ADP + phosphate + H(+). It participates in cell wall biogenesis; peptidoglycan biosynthesis. Functionally, cell wall formation. Catalyzes the addition of glutamate to the nucleotide precursor UDP-N-acetylmuramoyl-L-alanine (UMA). The chain is UDP-N-acetylmuramoylalanine--D-glutamate ligase from Coxiella burnetii (strain Dugway 5J108-111).